Here is a 376-residue protein sequence, read N- to C-terminus: S-adenosylmethionine synthase (376 aa).

His-14 is a binding site for ATP. Residue Asp-16 participates in Mg(2+) binding. Glu-42 contributes to the K(+) binding site. 2 residues coordinate L-methionine: Glu-55 and Gln-98. The interval 98–108 (QSPEIALGISS) is flexible loop. ATP contacts are provided by residues 158–160 (DGK), 224–225 (RF), Asp-233, 239–240 (RK), Ala-256, and Lys-260. Asp-233 contacts L-methionine. Residue Lys-264 participates in L-methionine binding.

This sequence belongs to the AdoMet synthase family. Homotetramer; dimer of dimers. Requires Mg(2+) as cofactor. K(+) serves as cofactor.

It localises to the cytoplasm. It carries out the reaction L-methionine + ATP + H2O = S-adenosyl-L-methionine + phosphate + diphosphate. It functions in the pathway amino-acid biosynthesis; S-adenosyl-L-methionine biosynthesis; S-adenosyl-L-methionine from L-methionine: step 1/1. Functionally, catalyzes the formation of S-adenosylmethionine (AdoMet) from methionine and ATP. The overall synthetic reaction is composed of two sequential steps, AdoMet formation and the subsequent tripolyphosphate hydrolysis which occurs prior to release of AdoMet from the enzyme. This Aquifex aeolicus (strain VF5) protein is S-adenosylmethionine synthase.